We begin with the raw amino-acid sequence, 101 residues long: Small ribosomal subunit protein uS14 (101 aa).

Belongs to the universal ribosomal protein uS14 family. In terms of assembly, part of the 30S ribosomal subunit. Contacts proteins S3 and S10.

In terms of biological role, binds 16S rRNA, required for the assembly of 30S particles and may also be responsible for determining the conformation of the 16S rRNA at the A site. The protein is Small ribosomal subunit protein uS14 of Ruthia magnifica subsp. Calyptogena magnifica.